The chain runs to 183 residues: Bifunctional protein PyrR (183 aa).

The short motif at 100 to 112 is the PRPP-binding element; it reads VILVDDVLYTGRT.

Belongs to the purine/pyrimidine phosphoribosyltransferase family. PyrR subfamily.

The catalysed reaction is UMP + diphosphate = 5-phospho-alpha-D-ribose 1-diphosphate + uracil. Its function is as follows. Regulates the transcription of the pyrimidine nucleotide (pyr) operon in response to exogenous pyrimidines. Also displays a weak uracil phosphoribosyltransferase activity which is not physiologically significant. The chain is Bifunctional protein PyrR from Deinococcus deserti (strain DSM 17065 / CIP 109153 / LMG 22923 / VCD115).